The sequence spans 692 residues: Elongation factor G (692 aa).

Positions 8–282 (EKTRNIGIMA…AVLDYLPAPT (275 aa)) constitute a tr-type G domain. GTP-binding positions include 17–24 (AHIDAGKT), 81–85 (DTPGH), and 135–138 (NKMD). Ser213, Ser302, Ser569, and Ser680 each carry phosphoserine.

This sequence belongs to the TRAFAC class translation factor GTPase superfamily. Classic translation factor GTPase family. EF-G/EF-2 subfamily. Post-translationally, phosphorylated on threonine residue(s). Phosphorylated by PrkC and dephosphorylated by PrpC, in vitro.

The protein localises to the cytoplasm. Its function is as follows. Catalyzes the GTP-dependent ribosomal translocation step during translation elongation. During this step, the ribosome changes from the pre-translocational (PRE) to the post-translocational (POST) state as the newly formed A-site-bound peptidyl-tRNA and P-site-bound deacylated tRNA move to the P and E sites, respectively. Catalyzes the coordinated movement of the two tRNA molecules, the mRNA and conformational changes in the ribosome. This chain is Elongation factor G (fusA), found in Bacillus subtilis (strain 168).